We begin with the raw amino-acid sequence, 210 residues long: Superoxide dismutase [Mn], mitochondrial (210 aa).

Mn(2+)-binding residues include His-29, His-77, Asp-163, and His-167.

The protein belongs to the iron/manganese superoxide dismutase family. Homotetramer. Mn(2+) serves as cofactor.

Its subcellular location is the mitochondrion matrix. It catalyses the reaction 2 superoxide + 2 H(+) = H2O2 + O2. Its function is as follows. Destroys superoxide anion radicals which are normally produced within the cells and which are toxic to biological systems. The polypeptide is Superoxide dismutase [Mn], mitochondrial (sodB) (Aspergillus fumigatus (strain ATCC MYA-4609 / CBS 101355 / FGSC A1100 / Af293) (Neosartorya fumigata)).